The following is a 271-amino-acid chain: Calretinin (271 aa).

EF-hand domains follow at residues 16 to 51 (LTASQFLEIWKHFDADGNGYIEGKELENFFQELEKA), 63 to 98 (NFGEKMKEFMQKYDKNSDGKIEMAELAQILPTEENF), 107 to 142 (GSSAEFMEAWRKYDTDRSGYIEANELKGFLSDLLKK), 151 to 186 (KLQEYTQTILRMFDLNGDGKLGLSEMSRLLPVQENF), 195 to 230 (LTSEEFNAIFTFYDKDRSGYIDEHELDALLKDLYEK), and 235 to 270 (MNIQQLTNYRKSVMSLAEAGKLYRKDLEIVLCSEPP). Ca(2+) contacts are provided by D29, D31, N33, Y35, E40, D76, N78, D80, K82, E87, D120, D122, S124, Y126, E131, D164, N166, D168, K170, E175, D208, D210, S212, Y214, and E219. The residue at position 214 (Y214) is a Phosphotyrosine.

This sequence belongs to the calbindin family. Brain.

Its subcellular location is the synapse. It is found in the cell projection. It localises to the dendrite. Calcium-binding protein involved in calcium homeostasis and signal transduction. It plays a critical role in buffering intracellular calcium levels and modulating calcium-dependent signaling pathways. Predominantly expressed in specific neuronal populations, influences synaptic plasticity and neuronal excitability, contributing to learning and memory. During embryonic development, it facilitates neuronal differentiation and maturation. The protein is Calretinin of Homo sapiens (Human).